A 261-amino-acid chain; its full sequence is Acidic leucine-rich nuclear phosphoprotein 32 family member A (261 aa).

4 LRR repeats span residues 16–37 (QITE…TDEY), 39–60 (ALES…PKLP), 61–83 (NLKK…TTSP), and 84–105 (KLQY…KPLE). The LRRCT domain maps to 118–156 (NDATQVDNYREKIFKMLPSLNFLDGFDCNDEEVQSDGDD). 2 stretches are compositionally biased toward acidic residues: residues 145 to 185 (CNDE…EEAN) and 194 to 229 (YNDD…DGDA). The disordered stretch occupies residues 145 to 261 (CNDEEVQSDG…VRGKKRKHDG (117 aa)). Residues 238-252 (AKDKDGEKEADESQV) are compositionally biased toward basic and acidic residues.

Belongs to the ANP32 family. Post-translationally, phosphorylated on serine residues.

Its subcellular location is the nucleus. The protein resides in the cytoplasm. In terms of biological role, implicated in a number of cellular processes, including proliferation, differentiation, caspase-dependent and caspase-independent apoptosis, suppression of transformation (tumor suppressor), inhibition of protein phosphatase 2A, regulation of mRNA trafficking and stability, and inhibition of acetyltransferases as part of the INHAT (inhibitor of histone acetyltransferases) complex. The protein is Acidic leucine-rich nuclear phosphoprotein 32 family member A (Anp32a) of Drosophila melanogaster (Fruit fly).